A 64-amino-acid chain; its full sequence is Metallothionein-A (64 aa).

Belongs to the metallothionein superfamily. Type 4 family.

Its function is as follows. Metallothioneins have a high content of cysteine residues that bind various heavy metals. The polypeptide is Metallothionein-A (MTA) (Strongylocentrotus purpuratus (Purple sea urchin)).